We begin with the raw amino-acid sequence, 304 residues long: MSLMVIIMACVGFFLLQGAWPQEGVHRKPSFLALPGHLVKSEETVILQCWSDVMFEHFLLHREGKFNNTLHLIGEHHDGVSKANFSIGPMMPVLAGTYRCYGSVPHSPYQLSAPSDPLDMVIIGLYEKPSLSAQPGPTVQAGENVTLSCSSRSSYDMYHLSREGEAHERRLPAVRSINGTFQADFPLGPATHGGTYRCFGSFRDAPYEWSNSSDPLLVSVTGNPSNSWPSPTEPSSKTGNPRHLHVLIGTSVVKIPFTILLFFLLHRWCSDKKNAAVMDQEPAGNRTVNSEDSDEQDHQEVSYA.

A signal peptide spans 1-21; it reads MSLMVIIMACVGFFLLQGAWP. Residues 22–245 lie on the Extracellular side of the membrane; the sequence is QEGVHRKPSF…SKTGNPRHLH (224 aa). Ig-like C2-type domains follow at residues 42–107 and 142–205; these read EETV…VPHS and GENV…FRDA. The cysteines at positions 49 and 100 are disulfide-linked. Residues N67, N84, N144, N178, and N211 are each glycosylated (N-linked (GlcNAc...) asparagine). C149 and C198 form a disulfide bridge. Residues 220–239 form a disordered region; it reads VTGNPSNSWPSPTEPSSKTG. Residues 246–265 traverse the membrane as a helical segment; sequence VLIGTSVVKIPFTILLFFLL. Topologically, residues 266 to 304 are cytoplasmic; the sequence is HRWCSDKKNAAVMDQEPAGNRTVNSEDSDEQDHQEVSYA. Residues 280–304 form a disordered region; sequence QEPAGNRTVNSEDSDEQDHQEVSYA.

This sequence belongs to the immunoglobulin superfamily. As to quaternary structure, interacts with HLA-F; this interaction is direct.

Its subcellular location is the cell membrane. Its function is as follows. Receptor on natural killer (NK) cells for HLA-C alleles. Does not inhibit the activity of NK cells. The chain is Killer cell immunoglobulin-like receptor 2DS4 from Homo sapiens (Human).